The following is a 431-amino-acid chain: Magnetosome protein MamH (431 aa).

11 helical membrane passes run 21–41 (LLSALCMVFMTLVVAIQPLFL), 57–77 (ANVQVVTEVLDLFIFAYLGYL), 86–106 (IIVAGFLVAAIGAVIAPLSPW), 107–127 (IGGASIGALVVYYVSRVIMSA), 156–176 (TAFMMAFGVTLVYAVLMQIPA), 178–198 (AGIAVTMLLTAAVSLAGAWLA), 243–263 (MVFVGLFLMLWFIYFADLIKV), 274–294 (ILIGLMGAVVMLSIPVWRSFI), 302–321 (AVLLGMVLSALGFIMLGFII), 358–378 (LLGSVLGAFNVIGCIGIIFFV), and 380–400 (VGGFLFDYVGPPAPFVFTGVG).

It belongs to the major facilitator superfamily.

The protein localises to the magnetosome membrane. Its function is as follows. Required for correct biomineralization of the magnetosome; probably transports some form of iron. Partially functionally redundant with MamZ. This is Magnetosome protein MamH (mamH) from Paramagnetospirillum magneticum (strain ATCC 700264 / AMB-1) (Magnetospirillum magneticum).